Consider the following 265-residue polypeptide: Serine protease harobin (265 aa).

A signal peptide spans 1–18 (MPLIRVLASLLILQLSYG). Residues 19–33 (KSLDNGAKAITSLDR) constitute a propeptide that is removed on maturation. The Peptidase S1 domain maps to 34–257 (IIGGFECNPS…YKDWIEGIIA (224 aa)). Disulfide bonds link cysteine 40–cysteine 172, cysteine 59–cysteine 75, cysteine 106–cysteine 152, cysteine 107–cysteine 264, cysteine 151–cysteine 218, cysteine 183–cysteine 197, and cysteine 208–cysteine 233. Histidine 74 (charge relay system) is an active-site residue. A glycan (N-linked (GlcNAc...) asparagine) is linked at asparagine 112. Catalysis depends on aspartate 119, which acts as the Charge relay system. The N-linked (GlcNAc...) asparagine glycan is linked to asparagine 130. Catalysis depends on serine 212, which acts as the Charge relay system.

The protein belongs to the peptidase S1 family. Snake venom subfamily. As to quaternary structure, monomer. Harobin contains three additional Cys residues than other snake venom serine proteases, suggesting an additional disulfide bond. In addition, it is more stable than other snake 6-disulfide-bond serine proteases, since it is less sensitive to DTT. In terms of tissue distribution, expressed by the venom gland.

The protein localises to the secreted. Inhibited by PMSF. In terms of biological role, serine protein with fibrinolytic and fibrinogenolytic activities. Degrades Bbeta-chain (FGB) of fibrinogen first and then the Aalpha-chain (FGA). Gamma-chain (FGG) are also digested on prolonged incubation. In vitro, it cleaves high molecular weight (HMW) kininogen (KNG) releasing bradykinin that promotes vasodilation. In vitro and in vivo, it cleaves angiotensin-2 (AGT). This explains the reduction of blood pressure in hypertensive rats. Also has antithrombotic effects on thrombosis animal models. This is Serine protease harobin from Hydrophis hardwickii (Hardwick's spine-bellied seasnake).